Consider the following 287-residue polypeptide: Thiazole synthase (287 aa).

Catalysis depends on Lys111, which acts as the Schiff-base intermediate with DXP. Residues Gly172, 203-204 (AG), and 225-226 (NT) contribute to the 1-deoxy-D-xylulose 5-phosphate site. A disordered region spans residues 268 to 287 (PQEGVISTRPYGSQADEIGS).

This sequence belongs to the ThiG family. In terms of assembly, homotetramer. Forms heterodimers with either ThiH or ThiS.

Its subcellular location is the cytoplasm. It catalyses the reaction [ThiS sulfur-carrier protein]-C-terminal-Gly-aminoethanethioate + 2-iminoacetate + 1-deoxy-D-xylulose 5-phosphate = [ThiS sulfur-carrier protein]-C-terminal Gly-Gly + 2-[(2R,5Z)-2-carboxy-4-methylthiazol-5(2H)-ylidene]ethyl phosphate + 2 H2O + H(+). The protein operates within cofactor biosynthesis; thiamine diphosphate biosynthesis. Catalyzes the rearrangement of 1-deoxy-D-xylulose 5-phosphate (DXP) to produce the thiazole phosphate moiety of thiamine. Sulfur is provided by the thiocarboxylate moiety of the carrier protein ThiS. In vitro, sulfur can be provided by H(2)S. This is Thiazole synthase from Rhodopirellula baltica (strain DSM 10527 / NCIMB 13988 / SH1).